Reading from the N-terminus, the 261-residue chain is Ribonuclease HII (261 aa).

The RNase H type-2 domain maps to 71 to 259; it reads KYIAGVDEVG…VKEAKLHFDS (189 aa). Residues Asp-77, Glu-78, and Asp-169 each contribute to the a divalent metal cation site.

The protein belongs to the RNase HII family. The cofactor is Mn(2+). Mg(2+) is required as a cofactor.

It localises to the cytoplasm. The catalysed reaction is Endonucleolytic cleavage to 5'-phosphomonoester.. In terms of biological role, endonuclease that specifically degrades the RNA of RNA-DNA hybrids. In Listeria monocytogenes serotype 4a (strain HCC23), this protein is Ribonuclease HII.